The following is a 1405-amino-acid chain: DNA-directed RNA polymerase subunit beta' (1405 aa).

Positions 70, 72, 85, and 88 each coordinate Zn(2+). The Mg(2+) site is built by Asp-460, Asp-462, and Asp-464. The Zn(2+) site is built by Cys-815, Cys-889, Cys-896, and Cys-899. The disordered stretch occupies residues 1363-1388; it reads LAHHAERRRRREDPESTANPSAFDVE.

It belongs to the RNA polymerase beta' chain family. The RNAP catalytic core consists of 2 alpha, 1 beta, 1 beta' and 1 omega subunit. When a sigma factor is associated with the core the holoenzyme is formed, which can initiate transcription. Mg(2+) is required as a cofactor. The cofactor is Zn(2+).

It carries out the reaction RNA(n) + a ribonucleoside 5'-triphosphate = RNA(n+1) + diphosphate. Functionally, DNA-dependent RNA polymerase catalyzes the transcription of DNA into RNA using the four ribonucleoside triphosphates as substrates. The polypeptide is DNA-directed RNA polymerase subunit beta' (Chromohalobacter salexigens (strain ATCC BAA-138 / DSM 3043 / CIP 106854 / NCIMB 13768 / 1H11)).